The sequence spans 476 residues: Nuclear envelope morphology protein 1 (476 aa).

Residues 47–74 are disordered; it reads RRRSSYSASSLSSLSSKPTEKEVPTRNE. Over residues 51–62 the composition is skewed to low complexity; it reads SYSASSLSSLSS. The span at 64 to 74 shows a compositional bias: basic and acidic residues; that stretch reads PTEKEVPTRNE. A helical membrane pass occupies residues 123–139; sequence FFWGLCRFVFFPVLLSY. Disordered stretches follow at residues 164-190 and 232-256; these read SSHQDPAYSSFKRHRSSNSYSSSSNGN and GKANSNRSGHSHQPQSTQFSPPAND. The span at 234-256 shows a compositional bias: polar residues; sequence ANSNRSGHSHQPQSTQFSPPAND. Asn-237, Asn-257, Asn-284, and Asn-356 each carry an N-linked (GlcNAc...) asparagine glycan. The FCP1 homology domain maps to 299 to 460; that stretch reads SKLPRKTLVL…LNLLSFLHAL (162 aa).

It belongs to the Dullard family. In terms of assembly, component of the nem1-spo7 complex.

The protein localises to the endoplasmic reticulum membrane. It is found in the nucleus membrane. The catalysed reaction is O-phospho-L-seryl-[protein] + H2O = L-seryl-[protein] + phosphate. It carries out the reaction O-phospho-L-threonyl-[protein] + H2O = L-threonyl-[protein] + phosphate. Functionally, catalytic component of the nem1-spo7 complex which acts as a phosphatase and may be required for proper nuclear membrane morphology. The sequence is that of Nuclear envelope morphology protein 1 (nem1) from Schizosaccharomyces pombe (strain 972 / ATCC 24843) (Fission yeast).